The sequence spans 276 residues: Replication protein A 32 kDa subunit-A (276 aa).

A compositionally biased stretch (gly residues) spans 19–31; it reads GGGGYMQSPGGFG. Residues 19-47 are disordered; the sequence is GGGGYMQSPGGFGSPAPTQGEKKSRSRSQ. Residues 77–151 constitute a DNA-binding region (OB); it reads VTIVGIVRHA…KSVVAFKIAP (75 aa).

The protein belongs to the replication factor A protein 2 family. Component of the replication protein A complex (RPA/RP-A), a heterotrimeric complex composed of RPA1, RPA2 and RPA3. Post-translationally, differentially phosphorylated throughout the cell cycle, becoming phosphorylated at the G1-S transition and dephosphorylated in late mitosis. Phosphorylation increases upon replication fork stalling.

The protein localises to the nucleus. It localises to the PML body. In terms of biological role, as part of the heterotrimeric replication protein A complex (RPA/RP-A), binds and stabilizes single-stranded DNA intermediates, that form during DNA replication or upon DNA stress. It prevents their reannealing and in parallel, recruits and activates different proteins and complexes involved in DNA metabolism. Thereby, it plays an essential role both in DNA replication and the cellular response to DNA damage. In Xenopus laevis (African clawed frog), this protein is Replication protein A 32 kDa subunit-A (rpa2-a).